Here is a 309-residue protein sequence, read N- to C-terminus: Probable sugar phosphate/phosphate translocator At5g05820 (309 aa).

10 helical membrane-spanning segments follow: residues 9-29 (FFTI…LLLN), 42-62 (IFLT…AIAW), 77-97 (FFKI…GNIS), 100-120 (FLPV…TAVF), 130-150 (AWLT…ASGG), 154-174 (FHLF…LKSV), 192-212 (LLLY…LIME), 229-249 (IVWY…TNFL), 256-278 (ALTL…ILIF), and 282-301 (VSVT…ILYS). The EamA domain occupies 30-147 (KYLLSNYGFK…VPVVTGVVIA (118 aa)).

It belongs to the TPT transporter family. TPT (TC 2.A.7.9) subfamily.

The protein localises to the membrane. This Arabidopsis thaliana (Mouse-ear cress) protein is Probable sugar phosphate/phosphate translocator At5g05820.